Consider the following 603-residue polypeptide: Proline--tRNA ligase (603 aa).

This sequence belongs to the class-II aminoacyl-tRNA synthetase family. ProS type 1 subfamily. Homodimer.

It is found in the cytoplasm. It catalyses the reaction tRNA(Pro) + L-proline + ATP = L-prolyl-tRNA(Pro) + AMP + diphosphate. In terms of biological role, catalyzes the attachment of proline to tRNA(Pro) in a two-step reaction: proline is first activated by ATP to form Pro-AMP and then transferred to the acceptor end of tRNA(Pro). As ProRS can inadvertently accommodate and process non-cognate amino acids such as alanine and cysteine, to avoid such errors it has two additional distinct editing activities against alanine. One activity is designated as 'pretransfer' editing and involves the tRNA(Pro)-independent hydrolysis of activated Ala-AMP. The other activity is designated 'posttransfer' editing and involves deacylation of mischarged Ala-tRNA(Pro). The misacylated Cys-tRNA(Pro) is not edited by ProRS. The polypeptide is Proline--tRNA ligase (Prochlorococcus marinus (strain SARG / CCMP1375 / SS120)).